Consider the following 110-residue polypeptide: Protein YcgL (110 aa).

One can recognise a YcgL domain in the interval 14–98 (MFCVIYRSSK…PPEDLLKQHL (85 aa)). The segment at 88-110 (PPPEDLLKQHLSSVGQNTSHADR) is disordered. The segment covering 97–110 (HLSSVGQNTSHADR) has biased composition (polar residues).

This is Protein YcgL from Salmonella typhi.